Reading from the N-terminus, the 247-residue chain is Programmed cell death 1 ligand 2 (247 aa).

The first 19 residues, 1–19, serve as a signal peptide directing secretion; the sequence is MLLLLPILNLSLQLHPVAA. Topologically, residues 20–221 are extracellular; sequence LFTVTAPKEV…RMEPKVPRTW (202 aa). An Ig-like V-type domain is found at 21–118; that stretch reads FTVTAPKEVY…AWDYKYLTVK (98 aa). 2 cysteine pairs are disulfide-bonded: C42-C102 and C143-C192. 4 N-linked (GlcNAc...) asparagine glycosylation sites follow: N64, N157, N163, and N189. Residues 122-203 enclose the Ig-like C2-type domain; sequence SYMRIDTRIL…FWNAHMKELT (82 aa). Residues 222 to 242 form a helical membrane-spanning segment; the sequence is PLHVFIPACTIALIFLAIVII. At 243 to 247 the chain is on the cytoplasmic side; sequence QRKRI.

This sequence belongs to the immunoglobulin superfamily. BTN/MOG family. As to quaternary structure, interacts with PDCD1. As to expression, expressed in immature and mature bone marrow-derived dendritic cells and splenic dendritic cells. Highly expressed in placenta, liver and weakly expressed in heart, spleen, lymph nodes and thymus. Also expressed in some tumor cell lines of lymphoid origin.

It is found in the cell membrane. Its function is as follows. Involved in the costimulatory signal essential for T-cell proliferation and IFNG production in a PDCD1-independent manner. Interaction with PDCD1 inhibits T-cell proliferation by blocking cell cycle progression and cytokine production. The chain is Programmed cell death 1 ligand 2 (Pdcd1lg2) from Mus musculus (Mouse).